The sequence spans 489 residues: Serotonin-gated chloride channel mod-1 (489 aa).

The first 20 residues, 1–20 (MKFIPEITLLLLLFVHSTQA), serve as a signal peptide directing secretion. Residues 21 to 240 (KGKRRKCPEG…VTFTFKRRYG (220 aa)) are Extracellular-facing. 3 N-linked (GlcNAc...) asparagine glycosylation sites follow: Asn44, Asn103, and Asn144. Tyr180 and Trp226 together coordinate serotonin. Transmembrane regions (helical) follow at residues 241-261 (FYII…WVSF), 274-294 (VGIS…KNLP), and 304-324 (VWML…AFVC). At 325-458 (YISRCQNSVR…ARFHPEAVDK (134 aa)) the chain is on the cytoplasmic side. The tract at residues 365–398 (GSVISHYHPTSNGNGNNNRHDTPQVTGRGSLHRN) is disordered. Positions 372-391 (HPTSNGNGNNNRHDTPQVTG) are enriched in polar residues. A helical transmembrane segment spans residues 459–479 (FSIVAFPLAFTMFNLVYWWHY).

This sequence belongs to the ligand-gated ion channel (TC 1.A.9) family. As to expression, expressed in a subset of muscles, and head and tail neurons, including RME and GABAergic ventral nerve cord neurons. Expressed in AIY, RME, RID, RIF, ASI, DD1-6, and PVN neurons.

Its subcellular location is the membrane. The protein resides in the cell membrane. Its function is as follows. Functions as a 5-hydroxytryptamine (serotonin) receptor. This receptor is a ligand-gated anion-specific ion channel, selective for chloride ions. Relays a long-range endocrine signal from the body cavity neurons to modulate distal adipose triglyceride lipase atgl-1 function, via the nuclear receptor nhr-76. Together with the G-protein coupled serotonin receptor ser-1 involved in male mating behavior. May mediate an inhibitory effect of serotonin on egg laying. Involved in regulating locomotory behavior, perhaps by modulating interneuronal signaling, acting in concert with G-protein coupled serotonin receptor ser-4. In the presence of food, plays a role in initiating and extending dwelling behavior, perhaps acting in AIY, RIF and ASI neurons, in opposition to neuropeptide PDF-mediated signaling. Plays a role in aversive learning upon exposure to pathogens such as Gram-negative bacterium P.aeruginosa strain PA14; perhaps acting in interneurons in response to serotonin released by the serotonergic ADF neurons. The protein is Serotonin-gated chloride channel mod-1 of Caenorhabditis elegans.